A 643-amino-acid chain; its full sequence is Phosphomethylpyrimidine synthase (643 aa).

Residues Asn-248, Met-277, Tyr-306, His-342, 362–364 (SRG), 403–406 (DGLR), and Glu-442 each bind substrate. Residue His-446 participates in Zn(2+) binding. Tyr-469 contributes to the substrate binding site. His-510 is a binding site for Zn(2+). [4Fe-4S] cluster contacts are provided by Cys-590, Cys-593, and Cys-598.

This sequence belongs to the ThiC family. As to quaternary structure, homodimer. The cofactor is [4Fe-4S] cluster.

It catalyses the reaction 5-amino-1-(5-phospho-beta-D-ribosyl)imidazole + S-adenosyl-L-methionine = 4-amino-2-methyl-5-(phosphooxymethyl)pyrimidine + CO + 5'-deoxyadenosine + formate + L-methionine + 3 H(+). It participates in cofactor biosynthesis; thiamine diphosphate biosynthesis. Its function is as follows. Catalyzes the synthesis of the hydroxymethylpyrimidine phosphate (HMP-P) moiety of thiamine from aminoimidazole ribotide (AIR) in a radical S-adenosyl-L-methionine (SAM)-dependent reaction. This chain is Phosphomethylpyrimidine synthase, found in Burkholderia ambifaria (strain MC40-6).